The sequence spans 396 residues: Cell adhesion molecule 3 (396 aa).

The signal sequence occupies residues Met-1–Ala-22. Residues Asn-23–Val-124 form the Ig-like V-type domain. Over Asn-23–His-328 the chain is Extracellular. Disulfide bonds link Cys-48–Cys-108, Cys-150–Cys-207, and Cys-252–Cys-297. 2 consecutive Ig-like C2-type domains span residues Pro-128–Glu-226 and Pro-231–Asn-313. Asn-288 carries N-linked (GlcNAc...) asparagine glycosylation. A helical membrane pass occupies residues Ala-329–Leu-349. Residues Gly-350 to Ile-396 lie on the Cytoplasmic side of the membrane. The tract at residues Ala-365–Ile-396 is disordered. Ser-386 is subject to Phosphoserine.

It belongs to the nectin family. In terms of assembly, homodimer. Can form trans-heterodimers with NECTIN3. Interacts with EPB41L1, DLG3, PALS2 and CASK. As to expression, mainly expressed in brain, in neuronal cell bodies of cerebellum, cortex, hippocampus, hypothalamus and spinal cord. In spinal cord predominantly expressed in motor neurons. Expressed in axons, presynaptic nerve terminals, glia cell processes.

The protein localises to the cell membrane. It localises to the cell junction. Functionally, involved in cell-cell adhesion. Has both calcium-independent homophilic cell-cell adhesion activity and calcium-independent heterophilic cell-cell adhesion activity with IGSF4, NECTIN1 and NECTIN3. Interaction with EPB41L1 may regulate structure or function of cell-cell junctions. The sequence is that of Cell adhesion molecule 3 (Cadm3) from Mus musculus (Mouse).